Here is an 88-residue protein sequence, read N- to C-terminus: Sapecin-B (88 aa).

The first 24 residues, 1–24 (MKFLTSLLLLFVVVMVSAVNLSMA), serve as a signal peptide directing secretion. Positions 25 to 54 (KESANQLTERLQELDGAAIQEPAELNRHKR) are excised as a propeptide. 3 disulfides stabilise this stretch: Cys57–Cys78, Cys64–Cys84, and Cys68–Cys86.

The protein belongs to the invertebrate defensin family. Type 1 subfamily. In terms of tissue distribution, hemocytes and fat body.

It is found in the secreted. Sapecins, which are potent bactericidal proteins, are produced in response to injury. Sapecin B is cytotoxic to Gram-positive bacteria. The sequence is that of Sapecin-B from Sarcophaga peregrina (Flesh fly).